We begin with the raw amino-acid sequence, 95 residues long: Co-chaperonin GroES (95 aa).

It belongs to the GroES chaperonin family. As to quaternary structure, heptamer of 7 subunits arranged in a ring. Interacts with the chaperonin GroEL.

The protein localises to the cytoplasm. Functionally, together with the chaperonin GroEL, plays an essential role in assisting protein folding. The GroEL-GroES system forms a nano-cage that allows encapsulation of the non-native substrate proteins and provides a physical environment optimized to promote and accelerate protein folding. GroES binds to the apical surface of the GroEL ring, thereby capping the opening of the GroEL channel. This Staphylococcus saprophyticus subsp. saprophyticus (strain ATCC 15305 / DSM 20229 / NCIMB 8711 / NCTC 7292 / S-41) protein is Co-chaperonin GroES.